Consider the following 30-residue polypeptide: Cyclotide mech-1 (30 aa).

The segment at residues 1-30 (GVIPCGESCVFIPCINKKKCSCKNKVCYRD) is a cross-link (cyclopeptide (Gly-Asp)). Disulfide bonds link cysteine 5–cysteine 20, cysteine 9–cysteine 22, and cysteine 14–cysteine 27.

This is a cyclic peptide. Post-translationally, contains 3 disulfide bonds.

Its function is as follows. Probably participates in a plant defense mechanism (Potential). Binds to and induces leakage in phospholipd membranes, particularly ones containing 1-palmitoyl-2-oleophosphatidylethanolamine (POPE). Not active against Gram-negative bacterium E.coli ATCC 25922 or Gram-positive bacterium S.aureus ATCC 25923 up to a concentration of 64 uM. In Melicytus chathamicus (Chatham Island mahoe), this protein is Cyclotide mech-1.